Consider the following 694-residue polypeptide: MRLGLSSRSARSEEGSEIFLEGPVDGELSRLHRQRKVMELERRAYSREVHQRIRKQVEEIRQLEMLRAKLQMQINVAQTQVKRLGDKKRLADMDHLLKCRAQVQIEIEALQEQNRALEKQIQDWETHILTQSKDISTPDVILDQKMKIQRRIRILEDQLDRVTCHFDIHLVRNAALREELELLRIERGRYLNMDRKLKKEIHLLQEMVGALSTSSTSAYTAREEAKTKMGMLQERAEKELAQSDTEAQILLRQISHLEQLHRFLKLKNHDRQPDPGVVQKEEQRAWETSEGLRKTSQEKLVLRYEDTLNKLAQLTGESDPDLLVEKYLELEERNFAEFNFINEQNSELYHLQEEIKEMQEALVSEHASQDKQSLEREQQCKVLQQDVEKVCSESERLEARFQVLRVQLEKIKTDIQVLFDKAQCDNSVIKDLLGVKTYMRDRDIGLFLSTIEKRLVQLLTVQAFLEVQNNVPLADAALLALGQSIQEPPKKTTPLKPPDTMEDSSGVVIKDDYPMSKEELLSQVMKLVQLQDEEGSPKKRDSSPSLTLSSPRISLAAASVHARKASVVPESILSHKTGRGRGTGSISHVTFGDSASAPGPVTLASTSASGLPVSGRGSQGGRGAFKHTSSSSYLGSTGYLETSRGRESGTGGGHSQSMGSEMSRGFSSGSGQTSSAAPASRPSSATSKDSRGYN.

Coiled-coil stretches lie at residues 27–192 (ELSR…RYLN) and 222–259 (REEAKTKMGMLQERAEKELAQSDTEAQILLRQISHLEQ). A disordered region spans residues 271-290 (RQPDPGVVQKEEQRAWETSE). Residues 339–418 (NFINEQNSEL…EKIKTDIQVL (80 aa)) are a coiled coil. 2 disordered regions span residues 531–550 (QDEEGSPKKRDSSPSLTLSS) and 571–694 (SILS…RGYN). A phosphoserine mark is found at Ser536, Ser542, Ser543, and Ser545. The segment covering 628-642 (TSSSSYLGSTGYLET) has biased composition (low complexity). Positions 655–672 (SQSMGSEMSRGFSSGSGQ) are enriched in polar residues. The span at 673-687 (TSSAAPASRPSSATS) shows a compositional bias: low complexity.

Belongs to the ODA1/DCC2 family. As to quaternary structure, component of the outer dynein arm-docking complex along with ODAD2, ODAD3, ODAD4 and CLXN. Interacts with ODAD3. Interacts with ODAD4; this interaction may facilitate the recruitment and/or attachment of outer dynein arm docking complex proteins,including ODAD1, ODAD3, and ODAD4 to ciliary axonemes. Interacts with DNAH9. Interacts with MNS1. Interacts with PIERCE1 and PIERCE2; the interactions link the outer dynein arms docking complex (ODA-DC) to the internal microtubule inner proteins (MIP) in cilium axoneme.

It is found in the cytoplasm. The protein resides in the cytoskeleton. It localises to the cilium axoneme. Component of the outer dynein arm-docking complex that mediates outer dynein arms (ODA) binding onto the doublet microtubule. Involved in mediating assembly of both ODAs and their axonemal docking complex onto ciliary microtubules. This Rattus norvegicus (Rat) protein is Outer dynein arm-docking complex subunit 1 (Odad1).